The following is a 503-amino-acid chain: Maturase K (503 aa).

The protein belongs to the intron maturase 2 family. MatK subfamily.

It is found in the plastid. The protein localises to the chloroplast. Its function is as follows. Usually encoded in the trnK tRNA gene intron. Probably assists in splicing its own and other chloroplast group II introns. The protein is Maturase K of Rosa canina (Dog rose).